A 272-amino-acid polypeptide reads, in one-letter code: Shikimate dehydrogenase (NADP(+)) (272 aa).

Residues 14 to 16 (SKS) and threonine 61 contribute to the shikimate site. Catalysis depends on lysine 65, which acts as the Proton acceptor. Glutamate 77 is a binding site for NADP(+). Positions 86 and 102 each coordinate shikimate. Residues 126–130 (GAGGA), 149–154 (NRTVSR), and methionine 213 each bind NADP(+). Residue tyrosine 215 coordinates shikimate. Residue glycine 237 coordinates NADP(+).

It belongs to the shikimate dehydrogenase family. As to quaternary structure, homodimer.

It carries out the reaction shikimate + NADP(+) = 3-dehydroshikimate + NADPH + H(+). The protein operates within metabolic intermediate biosynthesis; chorismate biosynthesis; chorismate from D-erythrose 4-phosphate and phosphoenolpyruvate: step 4/7. Functionally, involved in the biosynthesis of the chorismate, which leads to the biosynthesis of aromatic amino acids. Catalyzes the reversible NADPH linked reduction of 3-dehydroshikimate (DHSA) to yield shikimate (SA). In Shigella flexneri, this protein is Shikimate dehydrogenase (NADP(+)).